The primary structure comprises 268 residues: Chymotrypsin-C (268 aa).

Positions Met-1–Ser-16 are cleaved as a signal peptide. Residues Cys-17 to Arg-29 constitute a propeptide, activation peptide. Cystine bridges form between Cys-17–Cys-141, Cys-59–Cys-75, Cys-155–Cys-222, Cys-186–Cys-202, and Cys-212–Cys-243. The N-linked (GlcNAc...) asparagine glycan is linked to Asn-25. In terms of domain architecture, Peptidase S1 spans Val-30–Leu-268. Active-site charge relay system residues include His-74 and Asp-121. Ser-216 serves as the catalytic Charge relay system.

It belongs to the peptidase S1 family. Elastase subfamily. Monomer. The zymogen is secreted as a ternary complex composed of procarboxypeptidase A, chymotrypsinogen C and proproteinase E. As to expression, pancreas.

The protein resides in the secreted. It localises to the extracellular space. It catalyses the reaction Preferential cleavage: Leu-|-Xaa, Tyr-|-Xaa, Phe-|-Xaa, Met-|-Xaa, Trp-|-Xaa, Gln-|-Xaa, Asn-|-Xaa.. Its function is as follows. Regulates activation and degradation of trypsinogens and procarboxypeptidases by targeting specific cleavage sites within their zymogen precursors. Has chymotrypsin-type protease activity and hypocalcemic activity. The sequence is that of Chymotrypsin-C (CTRC) from Bos taurus (Bovine).